Reading from the N-terminus, the 807-residue chain is 85/88 kDa calcium-independent phospholipase A2 (807 aa).

A Phosphoserine modification is found at serine 13. 9 ANK repeats span residues 120–147 (WTVTHLAVELGIRECFHHSRIISCANST), 151–181 (EGCTPLHLACRKGDSEILVELVQYCHAQMDV), 185–215 (KGETAFHYAVQGDNPQVLQLLGKNASAGLNQ), 219–248 (QGLTPLHLACQMGKQEMVRVLLLCNARCNI), 251–281 (PGGFPIHTAMKFSQKGCAEMIISMDSNQIHS), 286–312 (YGASPLHWAKNAEMARMLLKRGCDVDS), 316–345 (SGNTALHVAVTRNRFDCVMVLLTYGANAGA), 349–378 (HGNTPLHLAMSKDNMEMVKALIVFGAEVDT), and 382–403 (FGETPAFIASKISKLITRKALL). 2 helical membrane-spanning segments follow: residues 481–501 (LLCLDGGGVKGLVIIQLLIAI) and 512–532 (LFDWVAGTSTGGILALAILHS). Residues 482-666 (LCLDGGGVKG…LANNPTLDAM (185 aa)) form the PNPLA domain. The GXGXXG signature appears at 486–491 (GGGVKG). The GXSXG signature appears at 518-522 (GTSTG). Serine 520 functions as the Nucleophile in the catalytic mechanism. The active-site Proton acceptor is aspartate 653. The DGA/G motif lies at 653–655 (DGG). Residues 678 to 687 (RKGQGNKVKK) form a calmodulin-binding (1-9-14 motif) region. The interval 749–760 (AWCEMVGIQYFR) is calmodulin-binding (IQ motif).

As to quaternary structure, homodimer formed by catalytic domains tightly interacting through a large hydrophobic interface. The contact area involves 3 alpha helices, several loops and a part of the beta sheet from each monomer. Both active sites of the dimer are in close proximity adopting an open conformation that provide sufficient space for phospholipid access and favoring cooperativity in deacylation-reacylation reactions. Each monomer has 9 ankyrin repeats stacked side-by-side in an elongated structure oriented outwards from the catalytic core. In terms of tissue distribution, expressed in pancreatic beta-cells. Expressed in skeletal muscle (at protein level).

The protein resides in the cytoplasm. Its subcellular location is the cell membrane. The protein localises to the mitochondrion. It is found in the cell projection. It localises to the pseudopodium. It catalyses the reaction a 1,2-diacyl-sn-glycero-3-phosphocholine + H2O = a 1-acyl-sn-glycero-3-phosphocholine + a fatty acid + H(+). It carries out the reaction a 1-O-alkyl-2-acyl-sn-glycero-3-phosphocholine + H2O = a 1-O-alkyl-sn-glycero-3-phosphocholine + a fatty acid + H(+). The enzyme catalyses 1,2-dihexadecanoyl-sn-glycero-3-phosphocholine + H2O = 1-hexadecanoyl-sn-glycero-3-phosphocholine + hexadecanoate + H(+). The catalysed reaction is 1-hexadecanoyl-2-(9Z-octadecenoyl)-sn-glycero-3-phosphocholine + H2O = 1-hexadecanoyl-sn-glycero-3-phosphocholine + (9Z)-octadecenoate + H(+). It catalyses the reaction 1-hexadecanoyl-2-(9Z,12Z-octadecadienoyl)-sn-glycero-3-phosphocholine + H2O = (9Z,12Z)-octadecadienoate + 1-hexadecanoyl-sn-glycero-3-phosphocholine + H(+). It carries out the reaction 1-hexadecanoyl-2-(5Z,8Z,11Z,14Z-eicosatetraenoyl)-sn-glycero-3-phosphocholine + H2O = 1-hexadecanoyl-sn-glycero-3-phosphocholine + (5Z,8Z,11Z,14Z)-eicosatetraenoate + H(+). The enzyme catalyses 1-octadecanoyl-2-(5Z,8Z,11Z,14Z-eicosatetraenoyl)-sn-glycero-3-phosphocholine + H2O = 1-octadecanoyl-sn-glycero-3-phosphocholine + (5Z,8Z,11Z,14Z)-eicosatetraenoate + H(+). The catalysed reaction is 1-hexadecanoyl-2-(5Z,8Z,11Z,14Z-eicosatetraenoyl)-sn-glycero-3-phosphoethanolamine + H2O = 1-hexadecanoyl-sn-glycero-3-phosphoethanolamine + (5Z,8Z,11Z,14Z)-eicosatetraenoate + H(+). It catalyses the reaction 1,2-dihexadecanoyl-sn-glycero-3-phosphate + H2O = 1-hexadecanoyl-sn-glycero-3-phosphate + hexadecanoate + H(+). It carries out the reaction a 1-acyl-sn-glycero-3-phosphocholine + H2O = sn-glycerol 3-phosphocholine + a fatty acid + H(+). The enzyme catalyses 1-hexadecanoyl-sn-glycero-3-phosphocholine + H2O = sn-glycerol 3-phosphocholine + hexadecanoate + H(+). The catalysed reaction is 1-(5Z,8Z,11Z,14Z-eicosatetraenoyl)-sn-glycero-3-phosphocholine + H2O = sn-glycerol 3-phosphocholine + (5Z,8Z,11Z,14Z)-eicosatetraenoate + H(+). It catalyses the reaction 2-(5Z,8Z,11Z,14Z)-eicosatetraenoyl-sn-glycero-3-phosphocholine + H2O = sn-glycerol 3-phosphocholine + (5Z,8Z,11Z,14Z)-eicosatetraenoate + H(+). It carries out the reaction 1-O-hexadecyl-2-(5Z,8Z,11Z,14Z)-eicosatetraenoyl-sn-glycero-3-phosphocholine + H2O = 1-O-hexadecyl-sn-glycero-3-phosphocholine + (5Z,8Z,11Z,14Z)-eicosatetraenoate + H(+). The enzyme catalyses 1-O-hexadecyl-2-acetyl-sn-glycero-3-phosphocholine + H2O = 1-O-hexadecyl-sn-glycero-3-phosphocholine + acetate + H(+). The catalysed reaction is hexadecanoyl-CoA + H2O = hexadecanoate + CoA + H(+). It catalyses the reaction 1',3'-bis[1,2-di-(9Z-octadecenoyl)-sn-glycero-3-phospho]-glycerol + H2O = 1'-[1,2-di-(9Z-octadecenoyl)-sn-glycero-3-phospho]-3'-[1-(9Z-octadecenoyl)-sn-glycero-3-phospho]-glycerol + (9Z)-octadecenoate + H(+). It carries out the reaction 1'-[1,2-di-(9Z-octadecenoyl)-sn-glycero-3-phospho]-3'-[1-(9Z-octadecenoyl)-sn-glycero-3-phospho]-glycerol + H2O = 1',3'-bis-[1-(9Z-octadecenoyl)-sn-glycero-3-phospho]-glycerol + (9Z)-octadecenoate + H(+). The enzyme catalyses 1',3'-bis-[1,2-di-(9Z,12Z-octadecadienoyl)-sn-glycero-3-phospho]-glycerol + H2O = 1'-[1,2-di-(9Z,12Z-octadecadienoyl)-sn-glycero-3-phospho]-3'-[1-(9Z,12Z-octadecadienoyl)-sn-glycero-3-phospho]-glycerol + (9Z,12Z)-octadecadienoate + H(+). The catalysed reaction is 1-octadecanoyl-2-(15-hydroxy-(5Z,8Z,11Z,13E)-eicosatetraenoyl)-sn-glycero-3-phosphoethanolamine + H2O = 1-octadecanoyl-sn-glycero-3-phosphoethanolamine + 15-hydroxy-(5Z,8Z,11Z,13E)-eicosatetraenoate + H(+). Its activity is regulated as follows. Activated by ATP. Inhibited by calcium-activated calmodulin. Inhibited by bromoenol lactone (BEL). Calcium-independent phospholipase involved in phospholipid remodeling with implications in cellular membrane homeostasis, mitochondrial integrity and signal transduction. Hydrolyzes the ester bond of the fatty acyl group attached at sn-1 or sn-2 position of phospholipids (phospholipase A1 and A2 activity respectively), producing lysophospholipids that are used in deacylation-reacylation cycles. Hydrolyzes both saturated and unsaturated long fatty acyl chains in various glycerophospholipid classes such as phosphatidylcholines, phosphatidylethanolamines and phosphatidates, with a preference for hydrolysis at sn-2 position. Can further hydrolyze lysophospholipids carrying saturated fatty acyl chains (lysophospholipase activity). Upon oxidative stress, contributes to remodeling of mitochondrial phospholipids in pancreatic beta cells, in a repair mechanism to reduce oxidized lipid content. Preferentially hydrolyzes oxidized polyunsaturated fatty acyl chains from cardiolipins, yielding monolysocardiolipins that can be reacylated with unoxidized fatty acyls to regenerate native cardiolipin species. Hydrolyzes oxidized glycerophosphoethanolamines present in pancreatic islets, releasing oxidized polyunsaturated fatty acids such as hydroxyeicosatetraenoates (HETEs). Has thioesterase activity toward fatty-acyl CoA releasing CoA-SH known to facilitate fatty acid transport and beta-oxidation in mitochondria particularly in skeletal muscle. Plays a role in regulation of membrane dynamics and homeostasis. Selectively hydrolyzes sn-2 arachidonoyl group in plasmalogen phospholipids, structural components of lipid rafts and myelin. Regulates F-actin polymerization at the pseudopods, which is required for both speed and directionality of MCP1/CCL2-induced monocyte chemotaxis. Targets membrane phospholipids to produce potent lipid signaling messengers. Generates lysophosphatidate (LPA, 1-acyl-glycerol-3-phosphate), which acts via G-protein receptors in various cell types. Has phospholipase A2 activity toward platelet-activating factor (PAF, 1-O-alkyl-2-acetyl-sn-glycero-3-phosphocholine), likely playing a role in inactivation of this potent pro-inflammatory signaling lipid. In response to glucose, amplifies calcium influx in pancreatic beta cells to promote INS secretion. The chain is 85/88 kDa calcium-independent phospholipase A2 (Pla2g6) from Rattus norvegicus (Rat).